The following is a 418-amino-acid chain: Serine hydroxymethyltransferase (418 aa).

Residues L121 and 125 to 127 contribute to the (6S)-5,6,7,8-tetrahydrofolate site; that span reads GHL. K230 bears the N6-(pyridoxal phosphate)lysine mark. (6S)-5,6,7,8-tetrahydrofolate is bound by residues E246 and 355 to 357; that span reads SPF.

The protein belongs to the SHMT family. In terms of assembly, homodimer. Pyridoxal 5'-phosphate serves as cofactor.

The protein localises to the cytoplasm. It catalyses the reaction (6R)-5,10-methylene-5,6,7,8-tetrahydrofolate + glycine + H2O = (6S)-5,6,7,8-tetrahydrofolate + L-serine. It functions in the pathway one-carbon metabolism; tetrahydrofolate interconversion. The protein operates within amino-acid biosynthesis; glycine biosynthesis; glycine from L-serine: step 1/1. Its function is as follows. Catalyzes the reversible interconversion of serine and glycine with tetrahydrofolate (THF) serving as the one-carbon carrier. This reaction serves as the major source of one-carbon groups required for the biosynthesis of purines, thymidylate, methionine, and other important biomolecules. Also exhibits THF-independent aldolase activity toward beta-hydroxyamino acids, producing glycine and aldehydes, via a retro-aldol mechanism. In Streptococcus pneumoniae (strain ATCC 700669 / Spain 23F-1), this protein is Serine hydroxymethyltransferase.